The following is a 130-amino-acid chain: Small ribosomal subunit protein uS8 (130 aa).

This sequence belongs to the universal ribosomal protein uS8 family. As to quaternary structure, part of the 30S ribosomal subunit. Contacts proteins S5 and S12.

One of the primary rRNA binding proteins, it binds directly to 16S rRNA central domain where it helps coordinate assembly of the platform of the 30S subunit. The polypeptide is Small ribosomal subunit protein uS8 (Moorella thermoacetica (strain ATCC 39073 / JCM 9320)).